A 307-amino-acid polypeptide reads, in one-letter code: tRNA dimethylallyltransferase (307 aa).

ATP is bound at residue 10 to 17 (GPTASGKS). 12 to 17 (TASGKS) contacts substrate. 2 interaction with substrate tRNA regions span residues 35–38 (DSMQ) and 159–163 (QRLCR).

The protein belongs to the IPP transferase family. Monomer. Mg(2+) serves as cofactor.

It carries out the reaction adenosine(37) in tRNA + dimethylallyl diphosphate = N(6)-dimethylallyladenosine(37) in tRNA + diphosphate. Catalyzes the transfer of a dimethylallyl group onto the adenine at position 37 in tRNAs that read codons beginning with uridine, leading to the formation of N6-(dimethylallyl)adenosine (i(6)A). The sequence is that of tRNA dimethylallyltransferase from Phenylobacterium zucineum (strain HLK1).